A 205-amino-acid chain; its full sequence is Octanoyltransferase (205 aa).

A BPL/LPL catalytic domain is found at glutamate 30–alanine 205. Substrate-binding positions include arginine 69–histidine 76, serine 136–glycine 138, and glycine 149–alanine 151. The active-site Acyl-thioester intermediate is cysteine 167.

It belongs to the LipB family.

The protein resides in the cytoplasm. It carries out the reaction octanoyl-[ACP] + L-lysyl-[protein] = N(6)-octanoyl-L-lysyl-[protein] + holo-[ACP] + H(+). The protein operates within protein modification; protein lipoylation via endogenous pathway; protein N(6)-(lipoyl)lysine from octanoyl-[acyl-carrier-protein]: step 1/2. Its function is as follows. Catalyzes the transfer of endogenously produced octanoic acid from octanoyl-acyl-carrier-protein onto the lipoyl domains of lipoate-dependent enzymes. Lipoyl-ACP can also act as a substrate although octanoyl-ACP is likely to be the physiological substrate. This chain is Octanoyltransferase, found in Ectopseudomonas mendocina (strain ymp) (Pseudomonas mendocina).